Consider the following 91-residue polypeptide: Large ribosomal subunit protein bL31B (91 aa).

It belongs to the bacterial ribosomal protein bL31 family. Type B subfamily. As to quaternary structure, part of the 50S ribosomal subunit.

The sequence is that of Large ribosomal subunit protein bL31B from Neisseria meningitidis serogroup B (strain ATCC BAA-335 / MC58).